Reading from the N-terminus, the 481-residue chain is Argininosuccinate lyase (481 aa).

It belongs to the lyase 1 family. Argininosuccinate lyase subfamily.

It is found in the cytoplasm. The enzyme catalyses 2-(N(omega)-L-arginino)succinate = fumarate + L-arginine. The protein operates within amino-acid biosynthesis; L-arginine biosynthesis; L-arginine from L-ornithine and carbamoyl phosphate: step 3/3. The chain is Argininosuccinate lyase from Methanococcus maripaludis (strain C5 / ATCC BAA-1333).